Consider the following 184-residue polypeptide: Large ribosomal subunit protein uL6 (184 aa).

It belongs to the universal ribosomal protein uL6 family. Part of the 50S ribosomal subunit.

This protein binds to the 23S rRNA, and is important in its secondary structure. It is located near the subunit interface in the base of the L7/L12 stalk, and near the tRNA binding site of the peptidyltransferase center. This is Large ribosomal subunit protein uL6 from Thermosipho africanus (strain TCF52B).